A 106-amino-acid chain; its full sequence is UPF0060 membrane protein RHE_CH01408 (106 aa).

4 helical membrane-spanning segments follow: residues 4–24, 30–50, 59–79, and 86–106; these read IIYA…WAWL, AWWL…LTLV, FAAY…LIEG, and DIGG…APRA.

It belongs to the UPF0060 family.

It is found in the cell inner membrane. This Rhizobium etli (strain ATCC 51251 / DSM 11541 / JCM 21823 / NBRC 15573 / CFN 42) protein is UPF0060 membrane protein RHE_CH01408.